Reading from the N-terminus, the 318-residue chain is NADH-ubiquinone oxidoreductase chain 1 (318 aa).

8 helical membrane passes run 2 to 22 (LLTN…FLTL), 69 to 89 (LMFI…WAPL), 102 to 122 (ILFI…SGWA), 147 to 167 (AIIL…TLTI), 172 to 192 (MWLI…TLAE), 231 to 251 (IILM…NPLF), 253 to 273 (ELHT…FLWI), and 294 to 314 (LPLT…LAGI).

The protein belongs to the complex I subunit 1 family.

The protein resides in the mitochondrion inner membrane. It catalyses the reaction a ubiquinone + NADH + 5 H(+)(in) = a ubiquinol + NAD(+) + 4 H(+)(out). Functionally, core subunit of the mitochondrial membrane respiratory chain NADH dehydrogenase (Complex I) that is believed to belong to the minimal assembly required for catalysis. Complex I functions in the transfer of electrons from NADH to the respiratory chain. The immediate electron acceptor for the enzyme is believed to be ubiquinone. The protein is NADH-ubiquinone oxidoreductase chain 1 (MT-ND1) of Bradypus variegatus (Brown-throated three-fingered sloth).